The following is a 949-amino-acid chain: MKMLQNKGPLQELTLNAMAPNGIFQDEPMIQKFENHYVFKKDMKSKRNKEVKNQMNDWLAYGYLCSVHEAKKWLEEETNNEYQNLDDFVDALVNGKVLCQLAFKYYPKLASNWKPRYQISERNTVYLNAFFHFLDFIGMFTPFRFETKDLVRRFNIPKVIYCLHALSYLLDFLEVTRHVPSLYGKLRIKKSQLNTATKEISLLKKAKKFPNFPKLKNFFCSYSHRHETATSNKQVSCFREVPAWIKQCQSQCRGFLTRKCVSIEKLRRDDMSERLGWLPKLETKLSSISDEERLILLKESHQIYRKMVSLHLELLHLPQLEMSLDFCGFSSDDSSIAISSQLVPPILNNLIFKLEESPQIWILIISRFSSDGIDKIDVQNFILLILKFFGFAISASDRRSFLNLIMSCVMVSIQQSSAEVGHSTSDSLISWASRLFTKGFCLQLQSFFEKHLGNVVDKFFLEHLCETTIESDAMRVVTEMLVSCYENRERIPNELPMVLKQIYYSRSESFKPSAIKEFIEYFLCDQLMNCLSVYYSKYFEGKDSKKFTLVKHFMNSLFGRVKLNEQTEIIWHTRNYRIVEALVRKLIHLSTPKIIPVYGGRTLSCTHKDIFDLQNILRYCDERGDFSSFPSFKKLISLLGSPKLFKKHENQILLLESKNEVIHSSLPCSKSSLYQLSLSLCIPLIEGHLRNSLEEILFGVPTELENQKFMSVLRNDKLIKSIHPGSLSGISNSFVNSKHPIEQWQSRLRKILHLFSGRNEDIASLQCVLQFGSSERIHLEDIQNSHRYLCSLKKNNSQKDIHRNPLLSHVFDTNTKSFDTLKTLNYKHAILKKSMGELYKMEMIHECPRQLFGQILVVYLNRERTLLNFYLIENSKTIDEATLQLTDLIQAIKTGIYYLRMFNLPFHVKQLYTWLAPISKYDSEISFNQKKERRKTFLSFERRGKNRKF.

Residues 64 to 170 (LCSVHEAKKW…YCLHALSYLL (107 aa)) form the Calponin-homology (CH) domain.

The protein localises to the nucleus. This is an uncharacterized protein from Schizosaccharomyces pombe (strain 972 / ATCC 24843) (Fission yeast).